The chain runs to 458 residues: Protein amnionless (458 aa).

An N-terminal signal peptide occupies residues 1 to 19 (MGALGRALLWLQLCALARA). Residues 20–366 (AYKLWVPTTD…LGSGSRAGLA (347 aa)) lie on the Extracellular side of the membrane. Residue N35 is glycosylated (N-linked (GlcNAc...) asparagine). Disulfide bonds link C43–C96, C137–C213, C205–C211, C223–C249, C234–C250, and C239–C253. An interaction with CUBN region spans residues 67 to 87 (SDMLLPRDGEFVLASGAGFGA). The VWFC domain occupies 203 to 254 (GACADPSGCVCGDAEVQPWICAALLQPLGGRCPPAACPDALRPEGQCCDLCG). Residues 367–387 (GGVAAGLLLLLLALAAGLLLL) form a helical membrane-spanning segment. At 388 to 458 (RRAPRLRWTK…VNPLFAEAEA (71 aa)) the chain is on the cytoplasmic side. The tract at residues 422–446 (SVGPVPRTPQPPPAQQAGSSSTSRS) is disordered.

Interacts (via extracellular region) with CUBN/cubilin. This gives rise to a huge complex containing one AMN chain and three CUBN chains. In terms of processing, N-glycosylated. Post-translationally, a soluble form arises by proteolytic removal of the membrane anchor. Detected in kidney (at protein level). Detected in kidney and ileum.

It localises to the apical cell membrane. It is found in the cell membrane. Its subcellular location is the endosome membrane. The protein localises to the membrane. The protein resides in the coated pit. It localises to the secreted. Functionally, membrane-bound component of the endocytic receptor formed by AMN and CUBN. Required for normal CUBN glycosylation and trafficking to the cell surface. The complex formed by AMN and CUBN is required for efficient absorption of vitamin B12. Required for normal CUBN-mediated protein transport in the kidney. This chain is Protein amnionless (AMN), found in Canis lupus familiaris (Dog).